Reading from the N-terminus, the 55-residue chain is uncharacterized protein (55 aa).

The interval methionine 1–asparagine 25 is disordered. Residues threonine 35–phenylalanine 55 traverse the membrane as a helical segment.

The protein resides in the membrane. This is an uncharacterized protein from Bacillus subtilis (strain 168).